The primary structure comprises 261 residues: Putative hydro-lyase VSAL_I1435 (261 aa).

This sequence belongs to the D-glutamate cyclase family.

In Aliivibrio salmonicida (strain LFI1238) (Vibrio salmonicida (strain LFI1238)), this protein is Putative hydro-lyase VSAL_I1435.